The primary structure comprises 513 residues: MAEVGEIIEGCRLPVLRRNQDNEDEWPLAEILSVKDISGRKLFYVHYIDFNKRLDEWVTHERLDLKKIQFPKKEAKTPTKNGLPGSRPGSPEREVPASAQASGKTLPIPVQITLRFNLPKEREAIPGGEPDQPLSSSSCLQPNHRSTKRKVEVVSPATPVPSETAPASVFPQNGAARRAVAAQPGRKRKSNCLGTDEDSQDSSDGIPSAPRMTGSLVSDRSHDDIVTRMKNIECIELGRHRLKPWYFSPYPQELTTLPVLYLCEFCLKYGRSLKCLQRHLTKCDLRHPPGNEIYRKGTISFFEIDGRKNKSYSQNLCLLAKCFLDHKTLYYDTDPFLFYVMTEYDCKGFHIVGYFSKEKESTEDYNVACILTLPPYQRRGYGKLLIEFSYELSKVEGKTGTPEKPLSDLGLLSYRSYWSQTILEILMGLKSESGERPQITINEISEITSIKKEDVISTLQYLNLINYYKGQYILTLSEDIVDGHERAMLKRLLRIDSKCLHFTPKDWSKRGKW.

Residues 8 to 65 (IEGCRLPVLRRNQDNEDEWPLAEILSVKDISGRKLFYVHYIDFNKRLDEWVTHERLDL) enclose the Tudor-knot domain. An N6-acetyllysine modification is found at lysine 52. Residues 69–106 (QFPKKEAKTPTKNGLPGSRPGSPEREVPASAQASGKTL) are disordered. Phosphoserine; by GSK3 is present on serine 86. A Phosphoserine; by CDK1 and CDK9 modification is found at serine 90. N6-acetyllysine; by autocatalysis is present on residues lysine 104 and lysine 120. The disordered stretch occupies residues 122 to 220 (REAIPGGEPD…RMTGSLVSDR (99 aa)). The span at 133 to 144 (PLSSSSCLQPNH) shows a compositional bias: polar residues. Residues lysine 148, lysine 150, lysine 187, and lysine 189 each carry the N6-acetyllysine; by autocatalysis modification. Residue serine 199 is modified to Phosphoserine. Residues 227–504 (TRMKNIECIE…IDSKCLHFTP (278 aa)) enclose the MYST-type HAT domain. Residues 260–285 (LYLCEFCLKYGRSLKCLQRHLTKCDL) form a C2HC MYST-type zinc finger. Lysine 327 carries the N6-acetyllysine; by autocatalysis modification. An interaction with ATF2 region spans residues 368–513 (ACILTLPPYQ…PKDWSKRGKW (146 aa)). Acetyl-CoA is bound by residues 370-372 (ILT) and 377-383 (QRRGYGK). Glutamate 403 (proton donor/acceptor) is an active-site residue. Positions 407 and 416 each coordinate acetyl-CoA. Lysine 430 is covalently cross-linked (Glycyl lysine isopeptide (Lys-Gly) (interchain with G-Cter in SUMO1); alternate). A Glycyl lysine isopeptide (Lys-Gly) (interchain with G-Cter in SUMO2); alternate cross-link involves residue lysine 430. A Glycyl lysine isopeptide (Lys-Gly) (interchain with G-Cter in SUMO1) cross-link involves residue lysine 451.

It belongs to the MYST (SAS/MOZ) family. In terms of assembly, component of the NuA4 histone acetyltransferase complex which contains the catalytic subunit KAT5/TIP60 and the subunits EP400, TRRAP/PAF400, BRD8/SMAP, EPC1, DMAP1/DNMAP1, RUVBL1/TIP49, RUVBL2, ING3, actin, ACTL6A/BAF53A, MORF4L1/MRG15, MORF4L2/MRGX, MRGBP, YEATS4/GAS41, VPS72/YL1 and MEAF6. KAT5/TIP60, EPC1, and ING3 together constitute a minimal HAT complex termed Piccolo NuA4. The NuA4 complex interacts with MYC. Interacts with ATM. Interacts with JADE1. Interacts with PLA2G4A/CPLA2, EDNRA and HDAC7. Interacts with the cytoplasmic tail of APP and APBB1/FE65. Interacts with TRIM24 and TRIM68. Forms a complex with SENP6 and UBE2I in response to UV irradiation. Identified in a complex with HINT1. Interacts with ATF2 and CUL3. Interacts with NR1D2 (via N-terminus). Component of a SWR1-like complex. Interacts with FOXP3. Interacts with ZBTB49. Interacts with SRF. Interacts with ATF3; promoting autoacetylation and deubiquitination by USP7. Interacts with EP300/p300; interaction promotes KAT5 autoacetylation. Interacts with PRKDC; interaction is impaired following KAT5 sumoylation. Interacts with GPR50. Interacts with NME3; this interaction enables recruitment of NME3 at DNA damage sites where it plays a role in the repair of DNA. As to quaternary structure, (Microbial infection) Interacts with HIV-1 TAT. Phosphorylated on Ser-86 and Ser-90; enhanced during G2/M phase. The phosphorylated form has a higher activity. Phosphorylation at Ser-90 by CDK1 or CDK9 is a prerequisite for phosphorylation at Ser-86 by GSK3. Phosphorylation at Ser-86 by GSK3 (GSK3A or GSK3B) activates acetyltransferase and acyltransferase activities. Phosphorylation at Ser-90 by CDK9 promotes KAT5 recruitment to chromatin. Phosphorylation by VRK1 following DNA damage promotes KAT5 association with chromatin and histone acetyltransferase activity. Post-translationally, autoacetylated. Autoacetylation is required for histone acetyltransferase activity. Autoacetylation at Lys-327 is facilitated by interaction with EP300/p300: it prevents ubiquitination and subsequent degradation by the proteasome and promotes acetylation of target proteins. Deacetylated by HDAC3 and SIRT1. Deacetylation by HDAC3 promotes its ubiquitination and cytoplasmic localization. In terms of processing, sumoylated by UBE2I at Lys-430 and Lys-451, leading to increase of its histone acetyltransferase activity in UV-induced DNA damage response, as well as its translocation to nuclear bodies. Sumoylation with SUMO2 by PIAS4 at Lys-430 promotes repair of DNA double-strand breaks (DSBs) via homologous recombination (HR). Sumoylation by PIAS4 impairs interaction with PRKDC, inhibiting non-homologous end joining (NHEJ)-mediated repair of DSBs, thereby facilitating HR. Desumoylated by SENP3. Ubiquitinated by MDM2, leading to its proteasome-dependent degradation. Ubiquitination is prevented by autoacetylation at Lys-327. Ubiquitinated following deacetylation by HDAC3, leading to cytoplasmic localization. Deubiquitinated by USP7 following interaction with ATF3, promoting its stabilization. Post-translationally, (Microbial infection) In case of HIV-1 infection, interaction with the viral Tat protein leads to KAT5 polyubiquitination and targets it to degradation.

The protein localises to the nucleus. It localises to the chromosome. The protein resides in the cytoplasm. Its subcellular location is the centromere. It is found in the kinetochore. The protein localises to the cytoskeleton. It localises to the spindle pole. The protein resides in the nucleolus. Its subcellular location is the perinuclear region. It carries out the reaction L-lysyl-[histone] + acetyl-CoA = N(6)-acetyl-L-lysyl-[histone] + CoA + H(+). The enzyme catalyses L-lysyl-[protein] + acetyl-CoA = N(6)-acetyl-L-lysyl-[protein] + CoA + H(+). The catalysed reaction is (2E)-butenoyl-CoA + L-lysyl-[protein] = N(6)-(2E)-butenoyl-L-lysyl-[protein] + CoA + H(+). It catalyses the reaction 2-hydroxyisobutanoyl-CoA + L-lysyl-[protein] = N(6)-(2-hydroxyisobutanoyl)-L-lysyl-[protein] + CoA + H(+). It carries out the reaction (S)-lactoyl-CoA + L-lysyl-[protein] = N(6)-[(S)-lactoyl]-L-lysyl-[protein] + CoA + H(+). Acyltransferase and acetyltransferase activities are activated by phosphorylation and autoacetylation. Autoacetylation activates the histone acetyltransferase activity. Functionally, catalytic subunit of the NuA4 histone acetyltransferase complex, a multiprotein complex involved in transcriptional activation of select genes principally by acetylation of nucleosomal histones H2A and H4. Histone acetylation alters nucleosome-DNA interactions and promotes interaction of the modified histones with other proteins which positively regulate transcription. The NuA4 histone acetyltransferase complex is required for the activation of transcriptional programs associated with proto-oncogene mediated growth induction, tumor suppressor mediated growth arrest and replicative senescence, apoptosis, and DNA repair. The NuA4 complex plays a direct role in repair of DNA double-strand breaks (DSBs) by promoting homologous recombination (HR): the complex inhibits TP53BP1 binding to chromatin via MBTD1, which recognizes and binds histone H4 trimethylated at 'Lys-20' (H4K20me), and KAT5 that catalyzes acetylation of 'Lys-15' of histone H2A (H2AK15ac), thereby blocking the ubiquitination mark required for TP53BP1 localization at DNA breaks. Also involved in DSB repair by mediating acetylation of 'Lys-5' of histone H2AX (H2AXK5ac), promoting NBN/NBS1 assembly at the sites of DNA damage. The NuA4 complex plays a key role in hematopoietic stem cell maintenance and is required to maintain acetylated H2A.Z/H2AZ1 at MYC target genes. The NuA4 complex is also required for spermatid development by promoting acetylation of histones: histone hyperacetylation is required for histone replacement during the transition from round to elongating spermatids. Component of a SWR1-like complex that specifically mediates the removal of histone H2A.Z/H2AZ1 from the nucleosome. Also acetylates non-histone proteins, such as BMAL1, ATM, AURKB, CHKA, CGAS, ERCC4/XPF, LPIN1, TP53/p53, NDC80/HEC1, NR1D2, RAN, SOX4, FOXP3, SQSTM1, ULK1 and RUBCNL/Pacer. Directly acetylates and activates ATM. Promotes nucleotide excision repair (NER) by mediating acetylation of ERCC4/XPF, thereby promoting formation of the ERCC4-ERCC1 complex. Relieves NR1D2-mediated inhibition of APOC3 expression by acetylating NR1D2. Acts as a regulator of regulatory T-cells (Treg) by catalyzing FOXP3 acetylation, thereby promoting FOXP3 transcriptional repressor activity. Involved in skeletal myoblast differentiation by mediating acetylation of SOX4. Catalyzes acetylation of APBB1/FE65, increasing its transcription activator activity. Promotes transcription elongation during the activation phase of the circadian cycle by catalyzing acetylation of BMAL1, promoting elongation of circadian transcripts. Together with GSK3 (GSK3A or GSK3B), acts as a regulator of autophagy: phosphorylated at Ser-86 by GSK3 under starvation conditions, leading to activate acetyltransferase activity and promote acetylation of key autophagy regulators, such as ULK1 and RUBCNL/Pacer. Acts as a regulator of the cGAS-STING innate antiviral response by catalyzing acetylation the N-terminus of CGAS, thereby promoting CGAS DNA-binding and activation. Also regulates lipid metabolism by mediating acetylation of CHKA or LPIN1. Promotes lipolysis of lipid droplets following glucose deprivation by mediating acetylation of isoform 1 of CHKA, thereby promoting monomerization of CHKA and its conversion into a tyrosine-protein kinase. Acts as a regulator of fatty-acid-induced triacylglycerol synthesis by catalyzing acetylation of LPIN1, thereby promoting the synthesis of diacylglycerol. In addition to protein acetyltransferase, can use different acyl-CoA substrates, such as (2E)-butenoyl-CoA (crotonyl-CoA), S-lactoyl-CoA (lactyl-CoA) and 2-hydroxyisobutanoyl-CoA (2-hydroxyisobutyryl-CoA), and is able to mediate protein crotonylation, lactylation and 2-hydroxyisobutyrylation, respectively. Acts as a key regulator of chromosome segregation and kinetochore-microtubule attachment during mitosis by mediating acetylation or crotonylation of target proteins. Catalyzes acetylation of AURKB at kinetochores, increasing AURKB activity and promoting accurate chromosome segregation in mitosis. Acetylates RAN during mitosis, promoting microtubule assembly at mitotic chromosomes. Acetylates NDC80/HEC1 during mitosis, promoting robust kinetochore-microtubule attachment. Catalyzes crotonylation of MAPRE1/EB1, thereby ensuring accurate spindle positioning in mitosis. Catalyzes lactylation of NBN/NBS1 in response to DNA damage, thereby promoting DNA double-strand breaks (DSBs) via homologous recombination (HR). Its function is as follows. (Microbial infection) Catalyzes the acetylation of flavivirus NS3 protein to modulate their RNA-binding and -unwinding activities leading to facilitate viral replication. The protein is Histone acetyltransferase KAT5 of Homo sapiens (Human).